Reading from the N-terminus, the 767-residue chain is Cation/H(+) antiporter 27 (767 aa).

11 consecutive transmembrane segments (helical) span residues Leu-39–Leu-59, Phe-63–Ile-83, Val-99–Cys-119, Ile-135–Ile-155, His-173–Leu-193, Leu-205–Ile-225, Val-242–Met-262, Ile-280–Phe-300, Ile-323–Ile-343, Ile-371–Ile-391, and Lys-415–Val-435.

The protein belongs to the monovalent cation:proton antiporter 2 (CPA2) transporter (TC 2.A.37) family. CHX (TC 2.A.37.4) subfamily. In terms of tissue distribution, specifically expressed in pollen.

It is found in the membrane. May operate as a cation/H(+) antiporter. The chain is Cation/H(+) antiporter 27 (CHX27) from Arabidopsis thaliana (Mouse-ear cress).